Reading from the N-terminus, the 502-residue chain is Glycerol kinase (502 aa).

Position 14 (threonine 14) interacts with ADP. The ATP site is built by threonine 14, threonine 15, and serine 16. Residue threonine 14 participates in sn-glycerol 3-phosphate binding. Arginine 18 serves as a coordination point for ADP. 3 residues coordinate sn-glycerol 3-phosphate: arginine 84, glutamate 85, and tyrosine 136. Residues arginine 84, glutamate 85, and tyrosine 136 each coordinate glycerol. Histidine 232 bears the Phosphohistidine; by HPr mark. Aspartate 246 contacts sn-glycerol 3-phosphate. Residues aspartate 246 and glutamine 247 each coordinate glycerol. Residues threonine 268 and glycine 311 each contribute to the ADP site. The ATP site is built by threonine 268, glycine 311, glutamine 315, and glycine 412. ADP is bound by residues glycine 412 and asparagine 416.

This sequence belongs to the FGGY kinase family. Homotetramer and homodimer (in equilibrium). Post-translationally, the phosphoenolpyruvate-dependent sugar phosphotransferase system (PTS), including enzyme I, and histidine-containing protein (HPr) are required for the phosphorylation, which leads to the activation of the enzyme.

The catalysed reaction is glycerol + ATP = sn-glycerol 3-phosphate + ADP + H(+). Its pathway is polyol metabolism; glycerol degradation via glycerol kinase pathway; sn-glycerol 3-phosphate from glycerol: step 1/1. With respect to regulation, activated by phosphorylation and inhibited by fructose 1,6-bisphosphate (FBP). Key enzyme in the regulation of glycerol uptake and metabolism. Catalyzes the phosphorylation of glycerol to yield sn-glycerol 3-phosphate. The protein is Glycerol kinase of Streptococcus sanguinis (strain SK36).